The primary structure comprises 137 residues: Large ribosomal subunit protein uL16 (137 aa).

This sequence belongs to the universal ribosomal protein uL16 family. Part of the 50S ribosomal subunit.

Functionally, binds 23S rRNA and is also seen to make contacts with the A and possibly P site tRNAs. The protein is Large ribosomal subunit protein uL16 of Acinetobacter baylyi (strain ATCC 33305 / BD413 / ADP1).